The chain runs to 247 residues: MSTLVLLRHGESVWNAEGLFTGWVDVDLSPKGEEEARRGGRLLAEAGIRPDVVHTSLLKRAIRTANIALEEAGLHWIPVKRSWRLNERHYGALQGKNKAQTRAEFGDEQFMIWRRSYDTPPPPLAEDSEFSQHNDPRYATLPPELMPRTECLADVVRRMLPYWYDAIIPDLAAGRTVLVAAHGNSLRALVKHLDNIDDKSIAGLNIPTGIPLVYELNDDFTPRKTGGEYLDPEAAKEAIEAVKNQGK.

Residues 8 to 15 (RHGESVWN), 21 to 22 (TG), R60, 87 to 90 (ERHY), K98, 114 to 115 (RR), and 183 to 184 (GN) contribute to the substrate site. Residue H9 is the Tele-phosphohistidine intermediate of the active site. The active-site Proton donor/acceptor is the E87.

The protein belongs to the phosphoglycerate mutase family. BPG-dependent PGAM subfamily.

The enzyme catalyses (2R)-2-phosphoglycerate = (2R)-3-phosphoglycerate. Its pathway is carbohydrate degradation; glycolysis; pyruvate from D-glyceraldehyde 3-phosphate: step 3/5. Functionally, catalyzes the interconversion of 2-phosphoglycerate and 3-phosphoglycerate. This chain is 2,3-bisphosphoglycerate-dependent phosphoglycerate mutase, found in Thermobifida fusca (strain YX).